Consider the following 611-residue polypeptide: Sodium-coupled monocarboxylate transporter 1 (611 aa).

Over 1 to 9 (MDASRDIGS) the chain is Extracellular. A helical transmembrane segment spans residues 10–30 (FVVWDYVVFAGMLLISAAIGI). Topologically, residues 31 to 51 (YYAFAGGGQQTSKDFLMGGRS) are cytoplasmic. The chain crosses the membrane as a helical span at residues 52–72 (MSAVPVALSLTASFMSAVTVL). Over 73–86 (GTPAEVYRFGAIFS) the chain is Extracellular. A helical transmembrane segment spans residues 87–107 (IFVITYFFVVVISAEVFLPVF). Residues 108–132 (YRLGITSTYEYLELRFNRCIRLCGT) lie on the Cytoplasmic side of the membrane. Residues 133–153 (ILFIVQTILYTGIVIYAPALA) traverse the membrane as a helical segment. The Extracellular segment spans residues 154-161 (LNQVTGFD). The helical transmembrane segment at 162–182 (LWGAVVATGVVCTFYCTLGGL) threads the bilayer. Topologically, residues 183–184 (KA) are cytoplasmic. A helical membrane pass occupies residues 185–205 (VVWTDVFQVGIMVAGFASVII). Topologically, residues 206 to 239 (QASITQHGINKILSDAFNGGRLNFWNFDPNPLQR) are extracellular. The chain crosses the membrane as a helical span at residues 240–260 (HTFWTIVIGGTFTWTTIYGVN). Residues 261–279 (QSQVQRYISCKSRLHAKLS) lie on the Cytoplasmic side of the membrane. Residues 280-300 (LYVNLVGLWVILTCSIFCGLA) form a helical membrane-spanning segment. At 301–336 (LYSRYRECDPWTSKKVSAIDQLMPYLVLDILKNYPG) the chain is on the extracellular side. The helical transmembrane segment at 337–359 (VPGLFVACAYSGTLSTVSSSINA) threads the bilayer. Topologically, residues 360-389 (LAAVTVEDLIKPRFKSLSEKSLSWISQGMS) are cytoplasmic. The helical transmembrane segment at 390 to 410 (VLYGALCIGMAALASLMGALL) threads the bilayer. The Extracellular segment spans residues 411–415 (QAALS). A helical membrane pass occupies residues 416–436 (IFGMVGGPLLGLFSLGILVPF). The Cytoplasmic portion of the chain corresponds to 437 to 439 (ANS). The chain crosses the membrane as a helical span at residues 440–460 (IGALTGLLAGFAISLWVGIGA). At 461–518 (QLYPPLPERTLPLPLETYGCNITHNGSDWMSTTEMPFSTSAFQIHNAERTPLMDNWYS) the chain is on the extracellular side. An N-linked (GlcNAc...) asparagine glycan is attached at asparagine 485. A helical membrane pass occupies residues 519–539 (LSYLYFSTIGTLTTLFVGILI). Over 540–611 (SLSTGGRKQN…HSGKINGTRL (72 aa)) the chain is Cytoplasmic. The PDZ-binding signature appears at 609–611 (TRL).

Belongs to the sodium:solute symporter (SSF) (TC 2.A.21) family. In terms of assembly, interacts (via PDZ-binding motif) with PDZK1 (via PDZ domains 1 and 3); interaction increases nicotinate transport activity of SLC5A8. As to expression, expressed in brain, colon, kidney and in the ileum and jejunum of small intestine. In the kidney, expression occurred in the proximal tubule and the loop of Henle, being restricted to tubular epithelial cells in both the cortex and the medulla. In the colon, predominantly expressed in the distal half of the large bowel and in the most terminal ileum. Localized selectively in the luminal surface of crypts in the large intestine and to the brush border in the middle parts of crypts in the cecum. In the brain, expression was seen throughout, exclusively in neurons, including the cortex, hippocampus, cerebellum and pituitary gland (at protein level). Expression is reduced in oligodendrogliomas.

It localises to the apical cell membrane. It carries out the reaction (S)-lactate(out) + 2 Na(+)(out) = (S)-lactate(in) + 2 Na(+)(in). It catalyses the reaction propanoate(out) + 2 Na(+)(out) = propanoate(in) + 2 Na(+)(in). The catalysed reaction is pyruvate(out) + 2 Na(+)(out) = pyruvate(in) + 2 Na(+)(in). The enzyme catalyses acetate(out) + 2 Na(+)(out) = acetate(in) + 2 Na(+)(in). It carries out the reaction butanoate(out) + 2 Na(+)(out) = butanoate(in) + 2 Na(+)(in). It catalyses the reaction nicotinate(out) + 2 Na(+)(out) = nicotinate(in) + 2 Na(+)(in). The catalysed reaction is (R)-3-hydroxybutanoate(out) + 2 Na(+)(out) = (R)-3-hydroxybutanoate(in) + 2 Na(+)(in). The enzyme catalyses acetoacetate(out) + 2 Na(+)(out) = acetoacetate(in) + 2 Na(+)(in). It carries out the reaction 4-methyl-2-oxopentanoate(out) + 2 Na(+)(out) = 4-methyl-2-oxopentanoate(in) + 2 Na(+)(in). It catalyses the reaction 5-oxo-L-proline(out) + 2 Na(+)(out) = 5-oxo-L-proline(in) + 2 Na(+)(in). The catalysed reaction is iodide(out) = iodide(in). The enzyme catalyses chloride(in) = chloride(out). It carries out the reaction nitrate(in) = nitrate(out). It catalyses the reaction bromide(in) = bromide(out). With respect to regulation, transport of D-lactate and pyruvate stimulated by alpha-cyano-4-hydroxycinnamic acid, but inhibited by the short-chain fatty acids acetate, propionate and butyrate. In terms of biological role, acts as an electrogenic sodium (Na(+)) and chloride (Cl-)-dependent sodium-coupled solute transporter, including transport of monocarboxylates (short-chain fatty acids including L-lactate, D-lactate, pyruvate, acetate, propionate, valerate and butyrate), mocarboxylate drugs (nicotinate, benzoate, salicylate and 5-aminosalicylate) and ketone bodies (beta-D-hydroxybutyrate, acetoacetate and alpha-ketoisocaproate), with a Na(+):substrate stoichiometry of between 4:1 and 2:1. Catalyzes passive carrier mediated diffusion of iodide. Mediates iodide transport from the thyrocyte into the colloid lumen through the apical membrane. May be responsible for the absorption of D-lactate and monocarboxylate drugs from the intestinal tract. May play a critical role in the entry of L-lactate and ketone bodies into neurons by a process driven by an electrochemical Na(+) gradient and hence contribute to the maintenance of the energy status and function of neurons. Mediates sodium-coupled electrogenic transport of pyroglutamate (5-oxo-L-proline). Can mediate the transport of chloride, bromide, iodide and nitrate ions when external concentration of sodium ions is reduced. The sequence is that of Sodium-coupled monocarboxylate transporter 1 from Mus musculus (Mouse).